A 434-amino-acid polypeptide reads, in one-letter code: Cobyrinate a,c-diamide synthase (434 aa).

Residues 240–430 enclose the GATase cobBQ-type domain; the sequence is KAYVAYDSAF…SHFHFSRTRR (191 aa). Residue cysteine 322 is the Nucleophile of the active site.

This sequence belongs to the CobB/CbiA family. Requires Mg(2+) as cofactor.

It carries out the reaction cob(II)yrinate + 2 L-glutamine + 2 ATP + 2 H2O = cob(II)yrinate a,c diamide + 2 L-glutamate + 2 ADP + 2 phosphate + 2 H(+). It functions in the pathway cofactor biosynthesis; adenosylcobalamin biosynthesis; cob(II)yrinate a,c-diamide from sirohydrochlorin (anaerobic route): step 10/10. In terms of biological role, catalyzes the ATP-dependent amidation of the two carboxylate groups at positions a and c of cobyrinate, using either L-glutamine or ammonia as the nitrogen source. This Sulfolobus acidocaldarius (strain ATCC 33909 / DSM 639 / JCM 8929 / NBRC 15157 / NCIMB 11770) protein is Cobyrinate a,c-diamide synthase.